A 197-amino-acid chain; its full sequence is Dephospho-CoA kinase (197 aa).

Positions 5-197 (RLGLTGSIGM…IAHIRETADA (193 aa)) constitute a DPCK domain. 13–18 (GMGKST) provides a ligand contact to ATP.

This sequence belongs to the CoaE family.

It localises to the cytoplasm. The catalysed reaction is 3'-dephospho-CoA + ATP = ADP + CoA + H(+). Its pathway is cofactor biosynthesis; coenzyme A biosynthesis; CoA from (R)-pantothenate: step 5/5. Functionally, catalyzes the phosphorylation of the 3'-hydroxyl group of dephosphocoenzyme A to form coenzyme A. The polypeptide is Dephospho-CoA kinase (Cereibacter sphaeroides (strain ATCC 17023 / DSM 158 / JCM 6121 / CCUG 31486 / LMG 2827 / NBRC 12203 / NCIMB 8253 / ATH 2.4.1.) (Rhodobacter sphaeroides)).